The chain runs to 378 residues: Protein-glutamate methylesterase/protein-glutamine glutaminase 2 (378 aa).

Residues 4–121 (KVLVVDDSGF…SRNPEKVKQL (118 aa)) form the Response regulatory domain. At Asp-55 the chain carries 4-aspartylphosphate. The segment at 141-188 (APAPAAAPTPAPIPAAAPSSFGSHSAPARPAPAPAPTRAPAASASSPA) is disordered. A compositionally biased stretch (pro residues) spans 145–155 (AAAPTPAPIPA). 2 stretches are compositionally biased toward low complexity: residues 156-168 (AAPS…SAPA) and 178-188 (RAPAASASSPA). The 192-residue stretch at 187–378 (PAPKRKNYKL…IGKHIVEACV (192 aa)) folds into the CheB-type methylesterase domain. Catalysis depends on residues Ser-202, His-229, and Asp-322.

This sequence belongs to the CheB family. In terms of processing, phosphorylated by CheA. Phosphorylation of the N-terminal regulatory domain activates the methylesterase activity.

The protein localises to the cytoplasm. The enzyme catalyses [protein]-L-glutamate 5-O-methyl ester + H2O = L-glutamyl-[protein] + methanol + H(+). It carries out the reaction L-glutaminyl-[protein] + H2O = L-glutamyl-[protein] + NH4(+). Involved in chemotaxis. Part of a chemotaxis signal transduction system that modulates chemotaxis in response to various stimuli. Catalyzes the demethylation of specific methylglutamate residues introduced into the chemoreceptors (methyl-accepting chemotaxis proteins or MCP) by CheR. Also mediates the irreversible deamidation of specific glutamine residues to glutamic acid. The polypeptide is Protein-glutamate methylesterase/protein-glutamine glutaminase 2 (Pseudomonas fluorescens (strain Pf0-1)).